We begin with the raw amino-acid sequence, 113 residues long: Beta-microseminoprotein (113 aa).

The first 20 residues, 1–20 (MEAWLGSLLFLATMVIASKA), serve as a signal peptide directing secretion. 5 disulfides stabilise this stretch: cysteine 22/cysteine 69, cysteine 38/cysteine 61, cysteine 56/cysteine 92, cysteine 59/cysteine 68, and cysteine 83/cysteine 106.

The protein belongs to the beta-microseminoprotein family. As to quaternary structure, homodimer; Interacts with PI16.

The protein resides in the secreted. The sequence is that of Beta-microseminoprotein (Msmb) from Mus musculus (Mouse).